Reading from the N-terminus, the 124-residue chain is Large ribosomal subunit protein bL20c (124 aa).

It belongs to the bacterial ribosomal protein bL20 family.

The protein localises to the plastid. It is found in the chloroplast. Its function is as follows. Binds directly to 23S ribosomal RNA and is necessary for the in vitro assembly process of the 50S ribosomal subunit. It is not involved in the protein synthesizing functions of that subunit. The polypeptide is Large ribosomal subunit protein bL20c (rpl20) (Euglena gracilis).